A 131-amino-acid polypeptide reads, in one-letter code: Small ribosomal subunit protein uS8 (131 aa).

Belongs to the universal ribosomal protein uS8 family. Part of the 30S ribosomal subunit. Contacts proteins S5 and S12.

Its function is as follows. One of the primary rRNA binding proteins, it binds directly to 16S rRNA central domain where it helps coordinate assembly of the platform of the 30S subunit. The polypeptide is Small ribosomal subunit protein uS8 (Mesomycoplasma hyopneumoniae (strain 7448) (Mycoplasma hyopneumoniae)).